A 205-amino-acid polypeptide reads, in one-letter code: Thymidine kinase (205 aa).

Residues 9-16 and 87-90 each bind ATP; these read SAMNAGKS and DESQ. The active-site Proton acceptor is Glu-88. 4 residues coordinate Zn(2+): Cys-145, Cys-147, Cys-182, and His-185.

The protein belongs to the thymidine kinase family. Homotetramer.

It localises to the cytoplasm. It carries out the reaction thymidine + ATP = dTMP + ADP + H(+). This chain is Thymidine kinase, found in Salmonella paratyphi A (strain ATCC 9150 / SARB42).